We begin with the raw amino-acid sequence, 177 residues long: Ferritin, heavy subunit (177 aa).

Positions Q7–G156 constitute a Ferritin-like diiron domain. Residues E24, E59, H62, E104, and Q138 each coordinate Fe cation.

This sequence belongs to the ferritin family. In terms of assembly, oligomer of 24 subunits. There are at least two types of subunits. The functional molecule forms a roughly spherical shell with a diameter of 12 nm and contains a central cavity into which the insoluble mineral iron core is deposited. Liver, gonads, head kidney, heart and spleen.

It carries out the reaction 4 Fe(2+) + O2 + 4 H(+) = 4 Fe(3+) + 2 H2O. In terms of biological role, stores iron in a soluble, non-toxic, readily available form. Important for iron homeostasis. Has ferroxidase activity. Iron is taken up in the ferrous form and deposited as ferric hydroxides after oxidation. The protein is Ferritin, heavy subunit of Salmo salar (Atlantic salmon).